The primary structure comprises 486 residues: Membrane-bound lytic murein transglycosylase F (486 aa).

The N-terminal stretch at 1–21 (MTRIKLNYFVIGVVALLLALA) is a signal peptide. Residues 22-268 (LWPNIPWRNG…RLEEKYLGHV (247 aa)) form a non-LT domain region. The tract at residues 269-486 (GSFDYVDTKT…VVGPGWSINN (218 aa)) is LT domain. Residue Glu313 is part of the active site.

This sequence in the N-terminal section; belongs to the bacterial solute-binding protein 3 family. It in the C-terminal section; belongs to the transglycosylase Slt family.

The protein localises to the cell outer membrane. It carries out the reaction Exolytic cleavage of the (1-&gt;4)-beta-glycosidic linkage between N-acetylmuramic acid (MurNAc) and N-acetylglucosamine (GlcNAc) residues in peptidoglycan, from either the reducing or the non-reducing ends of the peptidoglycan chains, with concomitant formation of a 1,6-anhydrobond in the MurNAc residue.. In terms of biological role, murein-degrading enzyme that degrades murein glycan strands and insoluble, high-molecular weight murein sacculi, with the concomitant formation of a 1,6-anhydromuramoyl product. Lytic transglycosylases (LTs) play an integral role in the metabolism of the peptidoglycan (PG) sacculus. Their lytic action creates space within the PG sacculus to allow for its expansion as well as for the insertion of various structures such as secretion systems and flagella. This chain is Membrane-bound lytic murein transglycosylase F, found in Yersinia enterocolitica serotype O:8 / biotype 1B (strain NCTC 13174 / 8081).